We begin with the raw amino-acid sequence, 919 residues long: Probable disease resistance protein At4g27220 (919 aa).

Coiled-coil stretches lie at residues 1-30 and 74-95; these read MFRS…LKRS and VEIL…KKIS. The region spanning 121-399 is the NB-ARC domain; the sequence is MLDKLKDCLK…AEGLLDGQHH (279 aa). 141-148 lines the ATP pocket; that stretch reads GMGGVGKT. 8 LRR repeats span residues 447–468, 469–492, 494–516, 519–540, 542–564, 565–587, 588–610, and 611–635; these read GEGF…QDKF, VSSV…VIEG, ETLV…FLQA, NLRI…FSNL, SLRS…ESLV, KLQF…EALS, SLRY…TILQ, and LSSL…EREG.

This sequence belongs to the disease resistance NB-LRR family.

Probable disease resistance protein. In Arabidopsis thaliana (Mouse-ear cress), this protein is Probable disease resistance protein At4g27220.